Here is a 458-residue protein sequence, read N- to C-terminus: ATP synthase subunit beta (458 aa).

Position 148–155 (148–155 (GGAGVGKT)) interacts with ATP.

Belongs to the ATPase alpha/beta chains family. In terms of assembly, F-type ATPases have 2 components, CF(1) - the catalytic core - and CF(0) - the membrane proton channel. CF(1) has five subunits: alpha(3), beta(3), gamma(1), delta(1), epsilon(1). CF(0) has three main subunits: a(1), b(2) and c(9-12). The alpha and beta chains form an alternating ring which encloses part of the gamma chain. CF(1) is attached to CF(0) by a central stalk formed by the gamma and epsilon chains, while a peripheral stalk is formed by the delta and b chains.

It is found in the cell inner membrane. The enzyme catalyses ATP + H2O + 4 H(+)(in) = ADP + phosphate + 5 H(+)(out). Produces ATP from ADP in the presence of a proton gradient across the membrane. The catalytic sites are hosted primarily by the beta subunits. The polypeptide is ATP synthase subunit beta (Mannheimia succiniciproducens (strain KCTC 0769BP / MBEL55E)).